The chain runs to 375 residues: E3 ubiquitin-protein ligase FANCL (375 aa).

Residues 104-294 (QPPSCSFCKD…KDVLEIDFPA (191 aa)) form a UBC-RWD region (URD) region. The RING-type; degenerate zinc-finger motif lies at 307 to 363 (CGICYARHLNGAIPDQVCNNPQCGQPFHEICLYEWLRGLSTSRQSFNVFFGDCPYCS).

In terms of assembly, belongs to the multisubunit FA complex composed of FANCA, FANCB, FANCC, FANCE, FANCF, FANCG, FANCL/PHF9 and FANCM. In complex with FANCF, FANCA and FANCG, but not with FANCC, nor FANCE, interacts with HES1; this interaction may be essential for the stability and nuclear localization of FA core complex proteins. Interacts with FANCI. Interacts with GGN. Interacts (via the RING-type zinc finger) with UBE2T and UBE2W. The RING-type zinc finger domain is monoubiquitinated in the presence of UBE2T and UBE2W.

The protein localises to the cytoplasm. The protein resides in the nucleus. It catalyses the reaction S-ubiquitinyl-[E2 ubiquitin-conjugating enzyme]-L-cysteine + [acceptor protein]-L-lysine = [E2 ubiquitin-conjugating enzyme]-L-cysteine + N(6)-ubiquitinyl-[acceptor protein]-L-lysine.. Its pathway is protein modification; protein ubiquitination. Its function is as follows. Ubiquitin ligase protein that mediates monoubiquitination of FANCD2, a key step in the DNA damage pathway. Also mediates monoubiquitination of FANCI. May stimulate the ubiquitin release from UBE2W. May be required for proper primordial germ cell proliferation in the embryonic stage, whereas it is probably not needed for spermatogonial proliferation after birth. This chain is E3 ubiquitin-protein ligase FANCL (Fancl), found in Mus musculus (Mouse).